We begin with the raw amino-acid sequence, 325 residues long: DNA-directed RNA polymerase subunit alpha (325 aa).

The segment at 1–238 (MSLKSLLKGF…EHLTVFINFE (238 aa)) is alpha N-terminal domain (alpha-NTD). Positions 255–325 (LKASLSKHVE…LGLSFGMRDF (71 aa)) are alpha C-terminal domain (alpha-CTD).

This sequence belongs to the RNA polymerase alpha chain family. As to quaternary structure, homodimer. The RNAP catalytic core consists of 2 alpha, 1 beta, 1 beta' and 1 omega subunit. When a sigma factor is associated with the core the holoenzyme is formed, which can initiate transcription.

The catalysed reaction is RNA(n) + a ribonucleoside 5'-triphosphate = RNA(n+1) + diphosphate. DNA-dependent RNA polymerase catalyzes the transcription of DNA into RNA using the four ribonucleoside triphosphates as substrates. The chain is DNA-directed RNA polymerase subunit alpha from Leptospira interrogans serogroup Icterohaemorrhagiae serovar copenhageni (strain Fiocruz L1-130).